Reading from the N-terminus, the 246-residue chain is Probable transcriptional regulatory protein RB5500 (246 aa).

It belongs to the TACO1 family.

The protein localises to the cytoplasm. This Rhodopirellula baltica (strain DSM 10527 / NCIMB 13988 / SH1) protein is Probable transcriptional regulatory protein RB5500.